Reading from the N-terminus, the 62-residue chain is Bowman-Birk type proteinase inhibitor (62 aa).

7 disulfides stabilise this stretch: C8-C61, C9-C24, C12-C57, C14-C22, C31-C38, C35-C50, and C40-C48.

As to quaternary structure, forms a monomer at protein concentrations of below 1 mM. At concentrations of above 2 mM, self-associates.

Functionally, inhibits trypsin but not chymotrypsin. Inhibits the trypsin-like proteinase activity present in larvae of the crop pests Adoxophyes orana, Hyphantria cunea, Lobesia botrana and Ostrinia nubilalis. The polypeptide is Bowman-Birk type proteinase inhibitor (Medicago scutellata (Snail medic)).